The primary structure comprises 196 residues: Anthranilate synthase component 2 (196 aa).

A Glutamine amidotransferase type-1 domain is found at 3–196; that stretch reads NIVFIDNFDS…IEWALEKNNA (194 aa). 57 to 59 lines the L-glutamine pocket; the sequence is GPG. Cys-84 (nucleophile; for GATase activity) is an active-site residue. L-glutamine-binding positions include Gln-88 and 134–135; that span reads SL. Catalysis depends on for GATase activity residues His-170 and Glu-172.

In terms of assembly, heterotetramer consisting of two non-identical subunits: a beta subunit (TrpG) and a large alpha subunit (TrpE).

The enzyme catalyses chorismate + L-glutamine = anthranilate + pyruvate + L-glutamate + H(+). It functions in the pathway amino-acid biosynthesis; L-tryptophan biosynthesis; L-tryptophan from chorismate: step 1/5. Functionally, part of a heterotetrameric complex that catalyzes the two-step biosynthesis of anthranilate, an intermediate in the biosynthesis of L-tryptophan. In the first step, the glutamine-binding beta subunit (TrpG) of anthranilate synthase (AS) provides the glutamine amidotransferase activity which generates ammonia as a substrate that, along with chorismate, is used in the second step, catalyzed by the large alpha subunit of AS (TrpE) to produce anthranilate. In the absence of TrpG, TrpE can synthesize anthranilate directly from chorismate and high concentrations of ammonia. The chain is Anthranilate synthase component 2 (trpG) from Vibrio parahaemolyticus serotype O3:K6 (strain RIMD 2210633).